Reading from the N-terminus, the 1544-residue chain is Rho guanine nucleotide exchange factor 12 (1544 aa).

A disordered region spans residues 1-62 (MSGTQSTITD…KTKSSSEESR (62 aa)). Ser2 is subject to N-acetylserine. Residues 28–45 (SPTDKKQKVERIASHDFD) are compositionally biased toward basic and acidic residues. Ser41 carries the post-translational modification Phosphoserine. The region spanning 72 to 151 (CVIIQKDDNG…LTVQGRPPGS (80 aa)) is the PDZ domain. A coiled-coil region spans residues 194-262 (MGEENNVVHN…LSKATGSAQD (69 aa)). The tract at residues 247 to 346 (PQLQEQLSKA…SLVGSPSTRI (100 aa)) is disordered. Polar residues-rich tracts occupy residues 249–260 (LQEQLSKATGSA) and 293–309 (DCSS…NADS). At Ser309 the chain carries Phosphoserine. A compositionally biased stretch (basic and acidic residues) spans 313–329 (GPKERIYLEENPEKSET). The span at 330–344 (IQDTDTQSLVGSPST) shows a compositional bias: polar residues. The residue at position 341 (Ser341) is a Phosphoserine. The RGSL domain maps to 367-558 (GQCSCFQSIE…LMYMKHLGVK (192 aa)). Residues 570-706 (GRIGFLPKIK…GDTLDGTPRT (137 aa)) form a disordered region. Residues 582–592 (MKKDKEGEEKG) show a composition bias toward basic and acidic residues. Positions 631–640 (STPSSVSPEP) are enriched in polar residues. Ser637 bears the Phosphoserine mark. A compositionally biased stretch (low complexity) spans 663-676 (ANSMSSVASGASFS). Phosphothreonine is present on Thr736. One can recognise a DH domain in the interval 787–977 (KRQEVINELF…RQILNYVNQA (191 aa)). Residues 1019–1132 (KMIHEGPLVW…WQDLICRMAA (114 aa)) enclose the PH domain. A compositionally biased stretch (polar residues) spans 1138–1149 (STKPIPLPQSTP). A disordered region spans residues 1138 to 1179 (STKPIPLPQSTPGEGDNDEEDPSKLKEEQHGISVTGLQSPDR). A phosphoserine mark is found at Ser1288, Ser1327, Ser1377, Ser1457, and Ser1541.

As to quaternary structure, interacts with GNA12 and GNA13, probably through the RGS-like domain. Interacts with RHOA, PLXNB1 and PLXNB2. Interacts through its PDZ domain with IGF1R beta subunit. Interacts with GCSAM. Found in a complex with ARHGEF11 and ARHGEF12; binding to ARHGEF11 and ARHGEF12 enhances CDC42 GEF activity of PLEKHG4B, and PLEKHG4B, in turn, inhibits ARHGEF11- and ARHGEF12-mediated RHOA activation. As to expression, ubiquitously expressed. Isoform 2 is found in jejunum and testis.

It is found in the cytoplasm. The protein localises to the membrane. Its function is as follows. May play a role in the regulation of RhoA GTPase by guanine nucleotide-binding alpha-12 (GNA12) and alpha-13 (GNA13). Acts as guanine nucleotide exchange factor (GEF) for RhoA GTPase and may act as GTPase-activating protein (GAP) for GNA12 and GNA13. The polypeptide is Rho guanine nucleotide exchange factor 12 (ARHGEF12) (Homo sapiens (Human)).